Consider the following 566-residue polypeptide: Proline--tRNA ligase (566 aa).

The protein belongs to the class-II aminoacyl-tRNA synthetase family. ProS type 1 subfamily. Homodimer.

The protein localises to the cytoplasm. It catalyses the reaction tRNA(Pro) + L-proline + ATP = L-prolyl-tRNA(Pro) + AMP + diphosphate. Catalyzes the attachment of proline to tRNA(Pro) in a two-step reaction: proline is first activated by ATP to form Pro-AMP and then transferred to the acceptor end of tRNA(Pro). As ProRS can inadvertently accommodate and process non-cognate amino acids such as alanine and cysteine, to avoid such errors it has two additional distinct editing activities against alanine. One activity is designated as 'pretransfer' editing and involves the tRNA(Pro)-independent hydrolysis of activated Ala-AMP. The other activity is designated 'posttransfer' editing and involves deacylation of mischarged Ala-tRNA(Pro). The misacylated Cys-tRNA(Pro) is not edited by ProRS. In Exiguobacterium sibiricum (strain DSM 17290 / CCUG 55495 / CIP 109462 / JCM 13490 / 255-15), this protein is Proline--tRNA ligase.